The following is a 524-amino-acid chain: RNA-splicing ligase RtcB homolog 2 (524 aa).

Mn(2+) contacts are provided by Asp141, Cys144, His249, His281, and His372. 248–252 (NHYLE) serves as a coordination point for GMP. Residues 372 to 373 (HN), 421 to 424 (GGSM), Ser428, 447 to 450 (HGAG), and Lys523 each bind GMP. His447 acts as the GMP-histidine intermediate in catalysis.

The protein belongs to the RtcB family. Catalytic component of the tRNA-splicing ligase complex. Requires Mn(2+) as cofactor.

It catalyses the reaction a 3'-end 3'-phospho-ribonucleotide-RNA + a 5'-end dephospho-ribonucleoside-RNA + GTP = a ribonucleotidyl-ribonucleotide-RNA + GMP + diphosphate. The enzyme catalyses a 3'-end 2',3'-cyclophospho-ribonucleotide-RNA + a 5'-end dephospho-ribonucleoside-RNA + GTP + H2O = a ribonucleotidyl-ribonucleotide-RNA + GMP + diphosphate + H(+). Functionally, catalytic subunit of the tRNA-splicing ligase complex that acts by directly joining spliced tRNA halves to mature-sized tRNAs by incorporating the precursor-derived splice junction phosphate into the mature tRNA as a canonical 3',5'-phosphodiester. May act as an RNA ligase with broad substrate specificity, and may function toward other RNAs. The chain is RNA-splicing ligase RtcB homolog 2 from Entamoeba dispar (strain ATCC PRA-260 / SAW760).